The following is a 95-amino-acid chain: Acyl carrier protein (95 aa).

In terms of domain architecture, Carrier spans 4 to 79 (KEIFERIEQV…HVMELTLDLV (76 aa)). Position 39 is an O-(pantetheine 4'-phosphoryl)serine (Ser-39).

It belongs to the acyl carrier protein (ACP) family. Post-translationally, 4'-phosphopantetheine is transferred from CoA to a specific serine of apo-ACP by AcpS. This modification is essential for activity because fatty acids are bound in thioester linkage to the sulfhydryl of the prosthetic group.

It is found in the cytoplasm. It participates in lipid metabolism; fatty acid biosynthesis. Carrier of the growing fatty acid chain in fatty acid biosynthesis. The chain is Acyl carrier protein from Saccharopolyspora erythraea (strain ATCC 11635 / DSM 40517 / JCM 4748 / NBRC 13426 / NCIMB 8594 / NRRL 2338).